Reading from the N-terminus, the 433-residue chain is Enolase (433 aa).

Q164 contributes to the (2R)-2-phosphoglycerate binding site. E206 functions as the Proton donor in the catalytic mechanism. 3 residues coordinate Mg(2+): D243, E289, and D316. Residues K341, R370, S371, and K392 each contribute to the (2R)-2-phosphoglycerate site. K341 (proton acceptor) is an active-site residue.

Belongs to the enolase family. Requires Mg(2+) as cofactor.

Its subcellular location is the cytoplasm. The protein localises to the secreted. It is found in the cell surface. The catalysed reaction is (2R)-2-phosphoglycerate = phosphoenolpyruvate + H2O. The protein operates within carbohydrate degradation; glycolysis; pyruvate from D-glyceraldehyde 3-phosphate: step 4/5. Its function is as follows. Catalyzes the reversible conversion of 2-phosphoglycerate (2-PG) into phosphoenolpyruvate (PEP). It is essential for the degradation of carbohydrates via glycolysis. This Borrelia hermsii (strain HS1 / DAH) protein is Enolase.